Here is a 497-residue protein sequence, read N- to C-terminus: ATP synthase subunit alpha 2 (497 aa).

Residue 167–174 (GERATGKT) participates in ATP binding.

Belongs to the ATPase alpha/beta chains family. As to quaternary structure, F-type ATPases have 2 components, CF(1) - the catalytic core - and CF(0) - the membrane proton channel. CF(1) has five subunits: alpha(3), beta(3), gamma(1), delta(1), epsilon(1). CF(0) has four main subunits: a(1), b(1), b'(1) and c(9-12).

It localises to the cell inner membrane. It catalyses the reaction ATP + H2O + 4 H(+)(in) = ADP + phosphate + 5 H(+)(out). Produces ATP from ADP in the presence of a proton gradient across the membrane. The alpha chain is a regulatory subunit. This is ATP synthase subunit alpha 2 from Cereibacter sphaeroides (strain ATCC 17029 / ATH 2.4.9) (Rhodobacter sphaeroides).